A 397-amino-acid polypeptide reads, in one-letter code: F-box protein At3g49450 (397 aa).

The F-box domain maps to 26–75 (GENSGTLPTDLMVEILSRVPAKSAARFRCVSNDWNSLLRSPYLTNLFLKR).

The polypeptide is F-box protein At3g49450 (Arabidopsis thaliana (Mouse-ear cress)).